Reading from the N-terminus, the 217-residue chain is MRDAEFWHNKWASNQIGFHLEDVNPLLTRFWSALAPKREETVLVPLCGKTEDLAWLATKHDHVEGAELSLIAVRSFFAEHFYTPTVTPISGQHELYQFDELSIYAGDFFTAPLSKADLIYDRAALIALPEEMRVEYVQRIRGLLNPGGRILLVSLDYPQQEMAGPPFSVTQEEIEHLFAGMHVTRLYQDIADEHHPKIAKQGLSRFSEEVYVIENDK.

Residues Trp-11, Leu-46, Glu-67, and Arg-122 each contribute to the S-adenosyl-L-methionine site.

The protein belongs to the class I-like SAM-binding methyltransferase superfamily. TPMT family.

It localises to the cytoplasm. The catalysed reaction is S-adenosyl-L-methionine + a thiopurine = S-adenosyl-L-homocysteine + a thiopurine S-methylether.. The chain is Thiopurine S-methyltransferase from Vibrio vulnificus (strain YJ016).